We begin with the raw amino-acid sequence, 574 residues long: Septation ring formation regulator EzrA (574 aa).

At 1 to 7 the chain is on the extracellular side; it reads MSSGLIL. Residues 8–26 traverse the membrane as a helical segment; the sequence is LIVAIVLLVIIAYLVGVII. The Cytoplasmic portion of the chain corresponds to 27 to 574; it reads RKRNDTLITS…YEKTRERIRF (548 aa). 4 coiled-coil regions span residues 102–131, 161–190, 276–379, and 459–493; these read NFIRAKHEINSVESQLNLVEEDITAIREAL, ENEDNFGSTMAEIEKQMKNIEAEFSQFVAL, VTLD…QQEK, and QLEALMDELSRGRINIEAVSRLSEVATAAIANLEE.

This sequence belongs to the EzrA family.

It is found in the cell membrane. Functionally, negative regulator of FtsZ ring formation; modulates the frequency and position of FtsZ ring formation. Inhibits FtsZ ring formation at polar sites. Interacts either with FtsZ or with one of its binding partners to promote depolymerization. In Streptococcus equi subsp. zooepidemicus (strain MGCS10565), this protein is Septation ring formation regulator EzrA.